Reading from the N-terminus, the 484-residue chain is tRNA sulfurtransferase (484 aa).

Residues 63 to 167 (QAFGERLACI…GDKLYMVTKR (105 aa)) form the THUMP domain. ATP contacts are provided by residues 185–186 (LI), Lys267, Gly289, and Gln298. The cysteines at positions 346 and 458 are disulfide-linked. Positions 406–484 (IDTNEVVIDI…GYHNVKVYRP (79 aa)) constitute a Rhodanese domain. Cys458 serves as the catalytic Cysteine persulfide intermediate.

The protein belongs to the ThiI family.

It localises to the cytoplasm. The enzyme catalyses [ThiI sulfur-carrier protein]-S-sulfanyl-L-cysteine + a uridine in tRNA + 2 reduced [2Fe-2S]-[ferredoxin] + ATP + H(+) = [ThiI sulfur-carrier protein]-L-cysteine + a 4-thiouridine in tRNA + 2 oxidized [2Fe-2S]-[ferredoxin] + AMP + diphosphate. It catalyses the reaction [ThiS sulfur-carrier protein]-C-terminal Gly-Gly-AMP + S-sulfanyl-L-cysteinyl-[cysteine desulfurase] + AH2 = [ThiS sulfur-carrier protein]-C-terminal-Gly-aminoethanethioate + L-cysteinyl-[cysteine desulfurase] + A + AMP + 2 H(+). Its pathway is cofactor biosynthesis; thiamine diphosphate biosynthesis. Functionally, catalyzes the ATP-dependent transfer of a sulfur to tRNA to produce 4-thiouridine in position 8 of tRNAs, which functions as a near-UV photosensor. Also catalyzes the transfer of sulfur to the sulfur carrier protein ThiS, forming ThiS-thiocarboxylate. This is a step in the synthesis of thiazole, in the thiamine biosynthesis pathway. The sulfur is donated as persulfide by IscS. The chain is tRNA sulfurtransferase from Shewanella oneidensis (strain ATCC 700550 / JCM 31522 / CIP 106686 / LMG 19005 / NCIMB 14063 / MR-1).